Consider the following 353-residue polypeptide: MTAILERRESESLWGRFCNWITSTENRLYIGWFGVLMIPTLLTATSVFIIAFIAAPPVDIDGIREPVSGSLLYGNNIISGAIIPTSAAIGLHFYPIWEAASVDEWLYNGGPYELIVLHFLLGVACYMGREWELSFRLGMRPWIAVAYSAPVAAATAVFLIYPIGQGSFSDGMPLGISGTFNFMIVFQAEHNILMHPFHMLGVAGVFGGSLFSAMHGSLVTSSLIRETTENESANEGYRFGQEEETYNIVAAHGYFGRLIFQYASFNNSRSLHFFLAAWPVVGIWFTALGISTMAFNLNGFNFNQSVVDSQGRVINTWADIINRANLGMEVMHERNAHNFPLDLAAIEAPSTNG.

Thr-2 is subject to N-acetylthreonine. At Thr-2 the chain carries Phosphothreonine. 3 helical membrane passes run Tyr-29–Ser-46, His-118–Leu-133, and Trp-142–Ala-156. A chlorophyll a-binding site is contributed by His-118. Tyr-126 serves as a coordination point for pheophytin a. The [CaMn4O5] cluster site is built by Asp-170 and Glu-189. A helical transmembrane segment spans residues Phe-197–Leu-218. His-198 contacts chlorophyll a. A quinone is bound by residues His-215 and Ser-264 to Phe-265. Position 215 (His-215) interacts with Fe cation. His-272 contacts Fe cation. A helical membrane pass occupies residues Phe-274–Leu-288. [CaMn4O5] cluster-binding residues include His-332, Glu-333, Asp-342, and Ala-344. Positions Ala-345 to Gly-353 are excised as a propeptide.

It belongs to the reaction center PufL/M/PsbA/D family. PSII is composed of 1 copy each of membrane proteins PsbA, PsbB, PsbC, PsbD, PsbE, PsbF, PsbH, PsbI, PsbJ, PsbK, PsbL, PsbM, PsbT, PsbX, PsbY, PsbZ, Psb30/Ycf12, at least 3 peripheral proteins of the oxygen-evolving complex and a large number of cofactors. It forms dimeric complexes. Requires The D1/D2 heterodimer binds P680, chlorophylls that are the primary electron donor of PSII, and subsequent electron acceptors. It shares a non-heme iron and each subunit binds pheophytin, quinone, additional chlorophylls, carotenoids and lipids. D1 provides most of the ligands for the Mn4-Ca-O5 cluster of the oxygen-evolving complex (OEC). There is also a Cl(-1) ion associated with D1 and D2, which is required for oxygen evolution. The PSII complex binds additional chlorophylls, carotenoids and specific lipids. as cofactor. Tyr-161 forms a radical intermediate that is referred to as redox-active TyrZ, YZ or Y-Z. In terms of processing, C-terminally processed by CTPA; processing is essential to allow assembly of the oxygen-evolving complex and thus photosynthetic growth.

It is found in the plastid. The protein resides in the chloroplast thylakoid membrane. It catalyses the reaction 2 a plastoquinone + 4 hnu + 2 H2O = 2 a plastoquinol + O2. Photosystem II (PSII) is a light-driven water:plastoquinone oxidoreductase that uses light energy to abstract electrons from H(2)O, generating O(2) and a proton gradient subsequently used for ATP formation. It consists of a core antenna complex that captures photons, and an electron transfer chain that converts photonic excitation into a charge separation. The D1/D2 (PsbA/PsbD) reaction center heterodimer binds P680, the primary electron donor of PSII as well as several subsequent electron acceptors. The sequence is that of Photosystem II protein D1 from Nicotiana debneyi (Debney's tobacco).